A 585-amino-acid chain; its full sequence is Probable ubiquitin carboxyl-terminal hydrolase 9 (585 aa).

Residues M1–E23 form a disordered region. The USP domain maps to Y41–A424. Residue C50 is the Nucleophile of the active site. A disordered region spans residues C85–S110. The active-site Proton acceptor is H375. The span at S447 to T470 shows a compositional bias: polar residues. Residues S447–D473 are disordered. S505 carries the phosphoserine modification. Disordered regions lie at residues F511–F530 and K540–R585. The segment covering F542–K551 has biased composition (polar residues). S549 is modified (phosphoserine). The segment covering S553–H570 has biased composition (basic and acidic residues). The span at L574 to R585 shows a compositional bias: polar residues.

The protein belongs to the peptidase C19 family. Interacts with bun107 and bun62.

It localises to the nucleus. The protein resides in the cytoplasm. Its subcellular location is the cell tip. The catalysed reaction is Thiol-dependent hydrolysis of ester, thioester, amide, peptide and isopeptide bonds formed by the C-terminal Gly of ubiquitin (a 76-residue protein attached to proteins as an intracellular targeting signal).. Ubiquitin C-terminal hydrolase involved in regulating actin dynamics and/or endocytosis at cell tips and septa. This chain is Probable ubiquitin carboxyl-terminal hydrolase 9 (ubp9), found in Schizosaccharomyces pombe (strain 972 / ATCC 24843) (Fission yeast).